Here is a 69-residue protein sequence, read N- to C-terminus: MSELNTKTSPATNQAPGPEEKGKAGSAKKTEDEEEEIDIDLTAPETEKAALAIQGKFRRFQKRKKDPSS.

A compositionally biased stretch (polar residues) spans 1-15 (MSELNTKTSPATNQA). A disordered region spans residues 1–47 (MSELNTKTSPATNQAPGPEEKGKAGSAKKTEDEEEEIDIDLTAPETE). Position 8 is a phosphothreonine (Thr-8). Residues 18 to 31 (PEEKGKAGSAKKTE) show a composition bias toward basic and acidic residues. Residues 46 to 69 (TEKAALAIQGKFRRFQKRKKDPSS) enclose the IQ domain.

This sequence belongs to the PCP4 family.

The sequence is that of Purkinje cell protein 4-like protein 1 (PCP4L1) from Bos taurus (Bovine).